Reading from the N-terminus, the 370-residue chain is tRNA-specific 2-thiouridylase MnmA (370 aa).

ATP contacts are provided by residues 9-16 (GMSGGVDS) and Met35. Positions 95-97 (NPD) are interaction with target base in tRNA. Catalysis depends on Cys100, which acts as the Nucleophile. Cysteines 100 and 196 form a disulfide. Gly124 is an ATP binding site. Residues 146–148 (KDQ) form an interaction with tRNA region. Cys196 functions as the Cysteine persulfide intermediate in the catalytic mechanism. An interaction with tRNA region spans residues 308–309 (RY).

It belongs to the MnmA/TRMU family.

Its subcellular location is the cytoplasm. It carries out the reaction S-sulfanyl-L-cysteinyl-[protein] + uridine(34) in tRNA + AH2 + ATP = 2-thiouridine(34) in tRNA + L-cysteinyl-[protein] + A + AMP + diphosphate + H(+). Its function is as follows. Catalyzes the 2-thiolation of uridine at the wobble position (U34) of tRNA, leading to the formation of s(2)U34. This is tRNA-specific 2-thiouridylase MnmA from Ralstonia pickettii (strain 12J).